We begin with the raw amino-acid sequence, 117 residues long: Ribosome-binding factor A (117 aa).

Belongs to the RbfA family. In terms of assembly, monomer. Binds 30S ribosomal subunits, but not 50S ribosomal subunits or 70S ribosomes.

The protein localises to the cytoplasm. Functionally, one of several proteins that assist in the late maturation steps of the functional core of the 30S ribosomal subunit. Associates with free 30S ribosomal subunits (but not with 30S subunits that are part of 70S ribosomes or polysomes). Required for efficient processing of 16S rRNA. May interact with the 5'-terminal helix region of 16S rRNA. In Lacticaseibacillus casei (strain BL23) (Lactobacillus casei), this protein is Ribosome-binding factor A.